The following is a 345-amino-acid chain: NADH-quinone oxidoreductase subunit H 1 (345 aa).

A run of 9 helical transmembrane segments spans residues 11–31 (IILT…ISLL), 50–70 (PNVV…KYIF), 84–104 (FFLA…VIPF), 115–135 (VAIL…IMGG), 161–181 (LGLI…SHIV), 187–207 (AFGL…LFFI), 248–268 (YIAI…GWLS), 277–297 (VFWM…VKAI), and 309–329 (IGWK…AFLA).

Belongs to the complex I subunit 1 family. As to quaternary structure, NDH-1 is composed of 14 different subunits. Subunits NuoA, H, J, K, L, M, N constitute the membrane sector of the complex.

The protein localises to the cell inner membrane. The enzyme catalyses a quinone + NADH + 5 H(+)(in) = a quinol + NAD(+) + 4 H(+)(out). NDH-1 shuttles electrons from NADH, via FMN and iron-sulfur (Fe-S) centers, to quinones in the respiratory chain. The immediate electron acceptor for the enzyme in this species is believed to be ubiquinone. Couples the redox reaction to proton translocation (for every two electrons transferred, four hydrogen ions are translocated across the cytoplasmic membrane), and thus conserves the redox energy in a proton gradient. This subunit may bind ubiquinone. This is NADH-quinone oxidoreductase subunit H 1 from Cereibacter sphaeroides (strain ATCC 17023 / DSM 158 / JCM 6121 / CCUG 31486 / LMG 2827 / NBRC 12203 / NCIMB 8253 / ATH 2.4.1.) (Rhodobacter sphaeroides).